Reading from the N-terminus, the 136-residue chain is NADPH-dependent 7-cyano-7-deazaguanine reductase (136 aa).

Cysteine 50 serves as the catalytic Thioimide intermediate. Residue aspartate 57 is the Proton donor of the active site. Residues 72 to 74 (YEL) and 91 to 92 (HE) contribute to the substrate site.

It belongs to the GTP cyclohydrolase I family. QueF type 1 subfamily.

It localises to the cytoplasm. It catalyses the reaction 7-aminomethyl-7-carbaguanine + 2 NADP(+) = 7-cyano-7-deazaguanine + 2 NADPH + 3 H(+). It functions in the pathway tRNA modification; tRNA-queuosine biosynthesis. Its function is as follows. Catalyzes the NADPH-dependent reduction of 7-cyano-7-deazaguanine (preQ0) to 7-aminomethyl-7-deazaguanine (preQ1). The polypeptide is NADPH-dependent 7-cyano-7-deazaguanine reductase (Prochlorococcus marinus (strain AS9601)).